The following is an 87-amino-acid chain: Apolipoprotein C-I (87 aa).

The signal sequence occupies residues 1 to 26 (MRLFLSLPVLVVVLAMVLEGPAPAQA).

Belongs to the apolipoprotein C1 family.

The protein localises to the secreted. Functionally, inhibitor of lipoprotein binding to the low density lipoprotein (LDL) receptor, LDL receptor-related protein, and very low density lipoprotein (VLDL) receptor. Associates with high density lipoproteins (HDL) and the triacylglycerol-rich lipoproteins in the plasma and makes up about 10% of the protein of the VLDL and 2% of that of HDL. Appears to interfere directly with fatty acid uptake and is also the major plasma inhibitor of cholesteryl ester transfer protein (CETP). Binds free fatty acids and reduces their intracellular esterification. Modulates the interaction of APOE with beta-migrating VLDL and inhibits binding of beta-VLDL to the LDL receptor-related protein. The sequence is that of Apolipoprotein C-I (APOC1) from Zalophus californianus (California sealion).